A 110-amino-acid polypeptide reads, in one-letter code: Phosphoribosyl-ATP pyrophosphatase (110 aa).

The protein belongs to the PRA-PH family.

It is found in the cytoplasm. It catalyses the reaction 1-(5-phospho-beta-D-ribosyl)-ATP + H2O = 1-(5-phospho-beta-D-ribosyl)-5'-AMP + diphosphate + H(+). The protein operates within amino-acid biosynthesis; L-histidine biosynthesis; L-histidine from 5-phospho-alpha-D-ribose 1-diphosphate: step 2/9. In Clostridium botulinum (strain ATCC 19397 / Type A), this protein is Phosphoribosyl-ATP pyrophosphatase.